A 223-amino-acid polypeptide reads, in one-letter code: ATP-dependent dethiobiotin synthetase BioD (223 aa).

D11 to Y16 provides a ligand contact to ATP. A Mg(2+)-binding site is contributed by T15. K36 is a catalytic residue. A substrate-binding site is contributed by T40. ATP-binding positions include D50, E110–G113, and N174–N175. Positions 50 and 110 each coordinate Mg(2+).

Belongs to the dethiobiotin synthetase family. As to quaternary structure, homodimer. Requires Mg(2+) as cofactor.

It is found in the cytoplasm. The catalysed reaction is (7R,8S)-7,8-diammoniononanoate + CO2 + ATP = (4R,5S)-dethiobiotin + ADP + phosphate + 3 H(+). The protein operates within cofactor biosynthesis; biotin biosynthesis; biotin from 7,8-diaminononanoate: step 1/2. Its function is as follows. Catalyzes a mechanistically unusual reaction, the ATP-dependent insertion of CO2 between the N7 and N8 nitrogen atoms of 7,8-diaminopelargonic acid (DAPA, also called 7,8-diammoniononanoate) to form a ureido ring. The sequence is that of ATP-dependent dethiobiotin synthetase BioD from Staphylococcus epidermidis (strain ATCC 35984 / DSM 28319 / BCRC 17069 / CCUG 31568 / BM 3577 / RP62A).